The sequence spans 347 residues: Endophilin-A3 (347 aa).

The interval 1–21 is membrane-binding amphipathic helix; the sequence is MSVAGLKKQFHKASQLFSEKI. In terms of domain architecture, BAR spans 18–249; sequence SEKISGAEGT…LELRIALASQ (232 aa). The tract at residues 60–87 is required for dimerization upon membrane association; the sequence is PNPAYRAKLGMLNTMSKLRGQVKATGYP. Residues 180–201 adopt a coiled-coil conformation; it reads EEEIRQAVEKFEESKELAERSM. The segment at 218–254 is interaction with ARC; the sequence is FVEAALDYHRQSTEILQELQNKLELRIALASQVPRRD. A disordered region spans residues 255–284; that stretch reads YMPKPVNTSSTNANGVEPSSSSKLTGTDIP. Over residues 260-284 the composition is skewed to polar residues; that stretch reads VNTSSTNANGVEPSSSSKLTGTDIP. Positions 285 to 344 constitute an SH3 domain; it reads SDQPCCRGLYDFEPENEGELGFKEGDIITLTNQIDENWYEGMLRGESGFFPINYVEVIVP.

It belongs to the endophilin family. Interacts with SGIP1 and DYDC1. Interacts with FASLG. Interacts with ATXN2. Interacts with BIN2. Interacts with ARC, DNM1 and SYNJ1. As to expression, expressed at high level in testis and at lower level in brain and liver.

It is found in the cytoplasm. It localises to the early endosome membrane. Its function is as follows. Implicated in endocytosis. May recruit other proteins to membranes with high curvature. The polypeptide is Endophilin-A3 (Sh3gl3) (Rattus norvegicus (Rat)).